Reading from the N-terminus, the 469-residue chain is Citrate synthase, mitochondrial (469 aa).

The N-terminal 30 residues, 1–30 (MSFLTVSRLAPKLLNSKNATYFLVAARNAS), are a transit peptide targeting the mitochondrion. Catalysis depends on residues histidine 304 and histidine 350. Position 359 (arginine 359) interacts with oxaloacetate. The active site involves aspartate 405. 2 residues coordinate oxaloacetate: arginine 431 and arginine 451.

It belongs to the citrate synthase family. In terms of assembly, homodimer.

It is found in the mitochondrion matrix. The enzyme catalyses oxaloacetate + acetyl-CoA + H2O = citrate + CoA + H(+). The protein operates within carbohydrate metabolism; tricarboxylic acid cycle; isocitrate from oxaloacetate: step 1/2. In terms of biological role, key enzyme of the Krebs tricarboxylic acid cycle which catalyzes the synthesis of citrate from acetyl coenzyme A and oxaloacetate. The chain is Citrate synthase, mitochondrial (cs) from Kajikia audax (Striped marlin).